The following is a 194-amino-acid chain: HTH-type transcriptional regulator BetI (194 aa).

The HTH tetR-type domain occupies 8 to 68 (EIRRAQLIDA…ATMRHVLRDL (61 aa)). The H-T-H motif DNA-binding region spans 31-50 (TLASVAQRANISTGIVSHYF).

Its pathway is amine and polyamine biosynthesis; betaine biosynthesis via choline pathway [regulation]. Functionally, repressor involved in the biosynthesis of the osmoprotectant glycine betaine. It represses transcription of the choline transporter BetT and the genes of BetAB involved in the synthesis of glycine betaine. In Burkholderia lata (strain ATCC 17760 / DSM 23089 / LMG 22485 / NCIMB 9086 / R18194 / 383), this protein is HTH-type transcriptional regulator BetI.